Consider the following 233-residue polypeptide: 1-(5-phosphoribosyl)-5-[(5-phosphoribosylamino)methylideneamino] imidazole-4-carboxamide isomerase (233 aa).

Asp-8 acts as the Proton acceptor in catalysis. Residue Asp-125 is the Proton donor of the active site.

It belongs to the HisA/HisF family.

It is found in the cytoplasm. It catalyses the reaction 1-(5-phospho-beta-D-ribosyl)-5-[(5-phospho-beta-D-ribosylamino)methylideneamino]imidazole-4-carboxamide = 5-[(5-phospho-1-deoxy-D-ribulos-1-ylimino)methylamino]-1-(5-phospho-beta-D-ribosyl)imidazole-4-carboxamide. Its pathway is amino-acid biosynthesis; L-histidine biosynthesis; L-histidine from 5-phospho-alpha-D-ribose 1-diphosphate: step 4/9. The protein is 1-(5-phosphoribosyl)-5-[(5-phosphoribosylamino)methylideneamino] imidazole-4-carboxamide isomerase of Thermococcus kodakarensis (strain ATCC BAA-918 / JCM 12380 / KOD1) (Pyrococcus kodakaraensis (strain KOD1)).